We begin with the raw amino-acid sequence, 341 residues long: Tetraacyldisaccharide 4'-kinase (341 aa).

Residue 64–71 (AVGGSGKT) participates in ATP binding.

Belongs to the LpxK family.

It carries out the reaction a lipid A disaccharide + ATP = a lipid IVA + ADP + H(+). The protein operates within glycolipid biosynthesis; lipid IV(A) biosynthesis; lipid IV(A) from (3R)-3-hydroxytetradecanoyl-[acyl-carrier-protein] and UDP-N-acetyl-alpha-D-glucosamine: step 6/6. Functionally, transfers the gamma-phosphate of ATP to the 4'-position of a tetraacyldisaccharide 1-phosphate intermediate (termed DS-1-P) to form tetraacyldisaccharide 1,4'-bis-phosphate (lipid IVA). This is Tetraacyldisaccharide 4'-kinase from Azoarcus sp. (strain BH72).